We begin with the raw amino-acid sequence, 172 residues long: Bifunctional protein PyrR (172 aa).

A PRPP-binding motif is present at residues 90–102; the sequence is LVLIDDVLMSGRT.

This sequence belongs to the purine/pyrimidine phosphoribosyltransferase family. PyrR subfamily.

It carries out the reaction UMP + diphosphate = 5-phospho-alpha-D-ribose 1-diphosphate + uracil. Its function is as follows. Regulates the transcription of the pyrimidine nucleotide (pyr) operon in response to exogenous pyrimidines. In terms of biological role, also displays a weak uracil phosphoribosyltransferase activity which is not physiologically significant. This Pseudomonas putida (strain W619) protein is Bifunctional protein PyrR.